Reading from the N-terminus, the 287-residue chain is MQQYLDLARYVLEHGKYRPNRTDTAGIGVFGYQMHFDISKHFPLLTTKKVHWKSIVHELLWFIKGDTNIKYLVDNKVNIWNEWPYESFKKSPHFNGESQKEFIERIRQDAKFAQQFGNLGPVYGKQWRDFNGVDQLKKVIAQIKVNPFSRRLIVSSWNPNEVDQMLLPPCHSLYQFYVQDGQLSCQLYQRSGDIFLGIPFNIASYSLLVYLVAKETNLKPGSFVHTIGDAHIYENHLEQIKLQLTRQPKPLPKVVLKSDKSIFDYQFDDIELVDYDHHPTIKGEVAV.

Arg21 serves as a coordination point for dUMP. His51 is a (6R)-5,10-methylene-5,6,7,8-tetrahydrofolate binding site. 150-151 (RR) is a binding site for dUMP. Cys170 acts as the Nucleophile in catalysis. Residues 190–193 (RSGD), Asn201, and 231–233 (HIY) contribute to the dUMP site. Asp193 lines the (6R)-5,10-methylene-5,6,7,8-tetrahydrofolate pocket. Ala286 is a binding site for (6R)-5,10-methylene-5,6,7,8-tetrahydrofolate.

This sequence belongs to the thymidylate synthase family. Bacterial-type ThyA subfamily. Homodimer.

The protein resides in the cytoplasm. The enzyme catalyses dUMP + (6R)-5,10-methylene-5,6,7,8-tetrahydrofolate = 7,8-dihydrofolate + dTMP. It participates in pyrimidine metabolism; dTTP biosynthesis. Functionally, catalyzes the reductive methylation of 2'-deoxyuridine-5'-monophosphate (dUMP) to 2'-deoxythymidine-5'-monophosphate (dTMP) while utilizing 5,10-methylenetetrahydrofolate (mTHF) as the methyl donor and reductant in the reaction, yielding dihydrofolate (DHF) as a by-product. This enzymatic reaction provides an intracellular de novo source of dTMP, an essential precursor for DNA biosynthesis. This is Thymidylate synthase from Mycoplasma pneumoniae (strain ATCC 29342 / M129 / Subtype 1) (Mycoplasmoides pneumoniae).